A 234-amino-acid chain; its full sequence is ATP synthase subunit a 1 (234 aa).

6 helical membrane passes run 29-49 (FLVHVTHAWLIMLLLTGVALL), 90-110 (LIATLALFILFSNLIALIPGF), 116-136 (NLNTNAALALAVFGMTHVVGV), 147-167 (FVGPVWWLAPLILPIEIIGHL), 186-206 (IVLVIFFTLVPLLLPIPMMLM), and 207-227 (GILVAFIQTFVFTLLAMIYIA).

Belongs to the ATPase A chain family. F-type ATPases have 2 components, CF(1) - the catalytic core - and CF(0) - the membrane proton channel. CF(1) has five subunits: alpha(3), beta(3), gamma(1), delta(1), epsilon(1). CF(0) has three main subunits: a(1), b(2) and c(9-12). The alpha and beta chains form an alternating ring which encloses part of the gamma chain. CF(1) is attached to CF(0) by a central stalk formed by the gamma and epsilon chains, while a peripheral stalk is formed by the delta and b chains.

It localises to the cell inner membrane. In terms of biological role, key component of the proton channel; it plays a direct role in the translocation of protons across the membrane. In Syntrophotalea carbinolica (strain DSM 2380 / NBRC 103641 / GraBd1) (Pelobacter carbinolicus), this protein is ATP synthase subunit a 1.